The chain runs to 131 residues: Large ribosomal subunit protein bL17 (131 aa).

It belongs to the bacterial ribosomal protein bL17 family. Part of the 50S ribosomal subunit. Contacts protein L32.

In Paraburkholderia phymatum (strain DSM 17167 / CIP 108236 / LMG 21445 / STM815) (Burkholderia phymatum), this protein is Large ribosomal subunit protein bL17.